The primary structure comprises 86 residues: Large ribosomal subunit protein uL23 (86 aa).

Belongs to the universal ribosomal protein uL23 family. In terms of assembly, part of the 50S ribosomal subunit. Contacts protein L29.

Its function is as follows. Binds to 23S rRNA. One of the proteins that surrounds the polypeptide exit tunnel on the outside of the ribosome. The sequence is that of Large ribosomal subunit protein uL23 from Methanococcus maripaludis (strain C5 / ATCC BAA-1333).